The primary structure comprises 95 residues: Large ribosomal subunit protein bL21 (95 aa).

This sequence belongs to the bacterial ribosomal protein bL21 family. As to quaternary structure, part of the 50S ribosomal subunit. Contacts protein L20.

In terms of biological role, this protein binds to 23S rRNA in the presence of protein L20. In Prosthecochloris vibrioformis (Chlorobium vibrioforme), this protein is Large ribosomal subunit protein bL21.